A 1535-amino-acid polypeptide reads, in one-letter code: ABC multidrug transporter atrF (1535 aa).

A disordered region spans residues 1-115 (MADDHRQPEA…DEQASSTDEY (115 aa)). An N-linked (GlcNAc...) asparagine glycan is attached at Asn-33. The span at 34-45 (TTSTSETDASAD) shows a compositional bias: low complexity. The segment covering 46 to 76 (ADARWGERNQGDPVSRRGAMEEFEEMRREVT) has biased composition (basic and acidic residues). The span at 79 to 93 (SLHRTRSAKDARRRS) shows a compositional bias: basic residues. 4 N-linked (GlcNAc...) asparagine glycosylation sites follow: Asn-149, Asn-274, Asn-287, and Asn-351. The ABC transporter 1 domain maps to 185–427 (VPALHFGKRP…FVDLGFYCPE (243 aa)). Transmembrane regions (helical) follow at residues 540–560 (LYTKYFIIVSNGLIVSSLFYG), 573–593 (GALFFSILFLVLQLTELMPAV), 618–638 (VVVDFPAIFCMVVPFTIIVYF), 646–666 (ASKFFIYFLFVYTTTFCITSL), 680–700 (AVRFAGIALNVLILFVGYVIP), 703–723 (GLIDGSIWFGWLFYVNPLSYS), and 791–811 (FGVVIAFTVLYLLVTVIAAEV). A disordered region spans residues 834-868 (KAQNGKGNDEEQVQNTGDNAALSRGEAKSSSSGEA). Residues 879–1117 (FTWSNVEYTV…DVIKYFADRG (239 aa)) form the ABC transporter 2 domain. The N-linked (GlcNAc...) asparagine glycan is linked to Asn-892. 915-922 (GASGAGKT) serves as a coordination point for ATP. The next 6 membrane-spanning stretches (helical) occupy residues 1212–1232 (YGKLFVSVIIGIFNGFTFWML), 1246–1266 (IFLIILIPPIVLNSIVPKFYI), 1295–1315 (IPMAIVSALIYWLLWYYPVGF), 1320–1340 (SSAGYVFLMSMLFFLFQASWG), 1342–1362 (WICAFAPSFTVISNVLPFFFV), and 1384–1406 (WMYYVNPVTWWLRGVISSVFPSV). Asn-1459 is a glycosylation site (N-linked (GlcNAc...) asparagine). 2 consecutive transmembrane segments (helical) span residues 1477–1497 (CFGIFLAFVIINWALVYFFIY) and 1503–1523 (GWSFGMGYLFGGVGVMIEGVK).

It belongs to the ABC transporter superfamily. ABCG family. PDR (TC 3.A.1.205) subfamily.

It is found in the cell membrane. The enzyme catalyses voriconazole(in) + ATP + H2O = voriconazole(out) + ADP + phosphate + H(+). Functionally, pleiotropic ABC efflux transporter involved in the basal level of azole susceptibility. Confers resistance to voriconazole. This is ABC multidrug transporter atrF from Aspergillus flavus (strain ATCC 200026 / FGSC A1120 / IAM 13836 / NRRL 3357 / JCM 12722 / SRRC 167).